The sequence spans 519 residues: Serine/threonine-protein kinase RIO3 (519 aa).

Residues S8 and S112 each carry the phosphoserine modification. Phosphotyrosine is present on Y122. The interval 122 to 159 (YEDSDSSEDEVDWQDTRDDPYRPAKPIPTPKKGFIGKG) is disordered. Over residues 124 to 134 (DSDSSEDEVDW) the composition is skewed to acidic residues. 3 positions are modified to phosphoserine: S125, S127, and S128. The 269-residue stretch at 251–519 (ETITGCISTG…DGGPPILYDE (269 aa)) folds into the Protein kinase domain. Residues 257-265 (ISTGKESVV) and K290 contribute to the ATP site. Residue D406 is the Proton acceptor of the active site.

Belongs to the protein kinase superfamily. RIO-type Ser/Thr kinase family. Interacts with CASP10. Interacts with IRF3; RIOK3 probably mediates the interaction of TBK1 with IRF3. Associated with 40S pre-ribosomal particles. Mg(2+) serves as cofactor. Autophosphorylated (in vitro).

Its subcellular location is the cytoplasm. The enzyme catalyses L-seryl-[protein] + ATP = O-phospho-L-seryl-[protein] + ADP + H(+). It carries out the reaction L-threonyl-[protein] + ATP = O-phospho-L-threonyl-[protein] + ADP + H(+). In terms of biological role, involved in regulation of type I interferon (IFN)-dependent immune response which plays a critical role in the innate immune response against DNA and RNA viruses. May act as an adapter protein essential for the recruitment of TBK1 to IRF3. Phosphorylates IFIH1 within the C-terminal region interfering with IFIH1 filament assembly on long dsRNA and resulting in attenuated IFIH1-signaling. Can inhibit CASP10 isoform 7-mediated activation of the NF-kappaB signaling pathway. May play a role in the biogenesis of the 40S ribosomal subunit. Involved in the processing of 21S pre-rRNA to the mature 18S rRNA. The polypeptide is Serine/threonine-protein kinase RIO3 (RIOK3) (Bos taurus (Bovine)).